A 264-amino-acid chain; its full sequence is Eukaryotic translation initiation factor 6 (264 aa).

Belongs to the eIF-6 family. In terms of assembly, monomer. Associates with the 60S ribosomal subunit.

Its subcellular location is the cytoplasm. The protein resides in the nucleus. It is found in the nucleolus. In terms of biological role, binds to the 60S ribosomal subunit and prevents its association with the 40S ribosomal subunit to form the 80S initiation complex in the cytoplasm. May also be involved in ribosome biogenesis. The polypeptide is Eukaryotic translation initiation factor 6 (Toxoplasma gondii (strain ATCC 50861 / VEG)).